The chain runs to 346 residues: Histidinol-phosphate aminotransferase (346 aa).

At K209 the chain carries N6-(pyridoxal phosphate)lysine.

The protein belongs to the class-II pyridoxal-phosphate-dependent aminotransferase family. Histidinol-phosphate aminotransferase subfamily. As to quaternary structure, homodimer. The cofactor is pyridoxal 5'-phosphate.

The catalysed reaction is L-histidinol phosphate + 2-oxoglutarate = 3-(imidazol-4-yl)-2-oxopropyl phosphate + L-glutamate. Its pathway is amino-acid biosynthesis; L-histidine biosynthesis; L-histidine from 5-phospho-alpha-D-ribose 1-diphosphate: step 7/9. The chain is Histidinol-phosphate aminotransferase from Aliivibrio fischeri (strain MJ11) (Vibrio fischeri).